A 263-amino-acid polypeptide reads, in one-letter code: UPF0758 protein Pden_2304 (263 aa).

Positions 141-263 (VLTSWDALLD…ELSFRSEGLL (123 aa)) constitute an MPN domain. Residues histidine 212, histidine 214, and aspartate 225 each coordinate Zn(2+). A JAMM motif motif is present at residues 212–225 (HNHPSGDPTPSQAD).

This sequence belongs to the UPF0758 family.

The polypeptide is UPF0758 protein Pden_2304 (Paracoccus denitrificans (strain Pd 1222)).